Here is a 501-residue protein sequence, read N- to C-terminus: Aminoaldehyde dehydrogenase ALDH10A8, chloroplastic (501 aa).

Residues Asp99 and Leu189 each coordinate Na(+). NAD(+) is bound by residues 238–243 (GSFATG) and 238–245 (GSFATGSK). Catalysis depends on Glu260, which acts as the Proton acceptor. Residues Cys294 and Glu393 each coordinate NAD(+). Cys294 acts as the Nucleophile in catalysis.

Belongs to the aldehyde dehydrogenase family. As to quaternary structure, homodimer. Widely expressed.

It localises to the cytoplasm. The protein localises to the plastid. It is found in the chloroplast. It catalyses the reaction 4-aminobutanal + NAD(+) + H2O = 4-aminobutanoate + NADH + 2 H(+). The enzyme catalyses 3-aminopropanal + NAD(+) + H2O = beta-alanine + NADH + 2 H(+). It carries out the reaction 4-(trimethylamino)butanal + NAD(+) + H2O = 4-(trimethylamino)butanoate + NADH + 2 H(+). The catalysed reaction is 4-guanidinobutanal + NAD(+) + H2O = 4-guanidinobutanoate + NADH + 2 H(+). It catalyses the reaction betaine aldehyde + NAD(+) + H2O = glycine betaine + NADH + 2 H(+). It functions in the pathway amine and polyamine biosynthesis; betaine biosynthesis via choline pathway; betaine from betaine aldehyde: step 1/1. Functionally, dehydrogenase that catalyzes the oxidation of several aminoaldehydes. Metabolizes and detoxifies aldehyde products of polyamine degradation to non-toxic amino acids. Catalyzes the oxidation of 4-aminobutanal and 3-aminopropanal to 4-aminobutanoate and beta-alanine, respectively. Production of 4-aminobutinoate by ALDH10A8 may confer tolerance to salt stress. Catalyzes the oxidation of 4-(trimethylamino)butanal and 4-guanidinobutanal to 4-trimethylammoniobutanoate and 4-guanidinobutanoate, respectively. Involved in glycine betaine biosynthesis. Catalyzes with low efficiency the oxidation of betaine aldehyde to glycine betaine. This Arabidopsis thaliana (Mouse-ear cress) protein is Aminoaldehyde dehydrogenase ALDH10A8, chloroplastic.